A 771-amino-acid chain; its full sequence is DnaJ homolog subfamily C member 16 (771 aa).

The N-terminal stretch at 1 to 25 is a signal peptide; the sequence is MELKRLSISWQFLIVLVLILQSLSA. The Cytoplasmic segment spans residues 26–532; it reads LDFDPYRVLG…ESLLHSNWRE (507 aa). The 65-residue stretch at 29 to 93 folds into the J domain; it reads DPYRVLGVSR…EKRTNYDHYG (65 aa). Residues 116-244 form the Thioredoxin domain; that stretch reads FYFDESFFHF…LRQFVESLLP (129 aa). The chain crosses the membrane as a helical; Anchor for type IV membrane protein span at residues 533–553; sequence MMPLLSLIFSALFILFGTVIV. Residues 554-771 are Extracellular-facing; the sequence is QAFSDSNEER…FYIPSWPELD (218 aa). Residues 559 to 590 are disordered; the sequence is SNEERESHPPDKEEVPEKAGKTEPSFTKESSS. Over residues 560–579 the composition is skewed to basic and acidic residues; the sequence is NEERESHPPDKEEVPEKAGK. Asparagine 628 carries an N-linked (GlcNAc...) asparagine glycan.

Its subcellular location is the endoplasmic reticulum membrane. Its function is as follows. Plays an important role in regulating the size of autophagosomes during the formation process. The chain is DnaJ homolog subfamily C member 16 (Dnajc16) from Rattus norvegicus (Rat).